The following is a 224-amino-acid chain: Octanoyltransferase (224 aa).

The 181-residue stretch at 33-213 (GTTAETMLLL…ALQAEFGREA (181 aa)) folds into the BPL/LPL catalytic domain. The interval 51 to 71 (GKRTTDDERPTDGTPVVDVDR) is disordered. Residues 71-78 (RGGKITWH), 143-145 (AIG), and 156-158 (GFA) each bind substrate. Cysteine 174 functions as the Acyl-thioester intermediate in the catalytic mechanism.

This sequence belongs to the LipB family.

It localises to the cytoplasm. It catalyses the reaction octanoyl-[ACP] + L-lysyl-[protein] = N(6)-octanoyl-L-lysyl-[protein] + holo-[ACP] + H(+). Its pathway is protein modification; protein lipoylation via endogenous pathway; protein N(6)-(lipoyl)lysine from octanoyl-[acyl-carrier-protein]: step 1/2. Functionally, catalyzes the transfer of endogenously produced octanoic acid from octanoyl-acyl-carrier-protein onto the lipoyl domains of lipoate-dependent enzymes. Lipoyl-ACP can also act as a substrate although octanoyl-ACP is likely to be the physiological substrate. This chain is Octanoyltransferase, found in Leifsonia xyli subsp. xyli (strain CTCB07).